A 391-amino-acid chain; its full sequence is Serpin-ZX (391 aa).

The RCL stretch occupies residues 337-361 (GTEAAAASAGVIKLRGLLMEEDEID). A glycan (N-linked (GlcNAc...) asparagine) is linked at N375.

It belongs to the serpin family. Interacts with RD21A. Expressed in root tips. Expressed in siliques (at protein level).

It is found in the secreted. It localises to the extracellular space. The protein localises to the apoplast. The protein resides in the cytoplasm. Functionally, inhibits metacaspase-9 (MC9) cysteine protease. Functions through cleavage of its reactive center loop and covalent binding to MC9. Involved in the control of elicitor-stimulated programmed cell death (PCD). During infection by the necrotrophic fungal pathogen Botrytis cinerea, functions to protect cells by limiting the PCD-promoting protease RD21A activity that is released from the ER body or vacuole to the cytoplasm. Involved in the control of water stress-induced cell death by limiting the pro-death protease RD21A activity that is released from the vacuole to the cytoplasm. The protein is Serpin-ZX of Arabidopsis thaliana (Mouse-ear cress).